The sequence spans 490 residues: Betaine aldehyde dehydrogenase (490 aa).

D93 serves as a coordination point for K(+). 150-152 (GAW) lines the NAD(+) pocket. Residue K162 is the Charge relay system of the active site. An NAD(+)-binding site is contributed by 176–179 (KPSE). V180 is a binding site for K(+). NAD(+) is bound at residue 230-233 (GIAS). L246 contributes to the K(+) binding site. E252 (proton acceptor) is an active-site residue. G254, C286, and E387 together coordinate NAD(+). The active-site Nucleophile is C286. C286 is subject to Cysteine sulfenic acid (-SOH). Residues K457 and G460 each coordinate K(+). E464 (charge relay system) is an active-site residue.

This sequence belongs to the aldehyde dehydrogenase family. Dimer of dimers. It depends on K(+) as a cofactor.

It carries out the reaction betaine aldehyde + NAD(+) + H2O = glycine betaine + NADH + 2 H(+). It functions in the pathway amine and polyamine biosynthesis; betaine biosynthesis via choline pathway; betaine from betaine aldehyde: step 1/1. In terms of biological role, involved in the biosynthesis of the osmoprotectant glycine betaine. Catalyzes the irreversible oxidation of betaine aldehyde to the corresponding acid. This chain is Betaine aldehyde dehydrogenase, found in Yersinia pseudotuberculosis serotype IB (strain PB1/+).